Consider the following 340-residue polypeptide: Aldo-keto reductase yakc [NADP(+)] (340 aa).

The Proton donor role is filled by tyrosine 56. Residue histidine 126 participates in substrate binding. Alanine 208 to alanine 218 serves as a coordination point for NADP(+).

The protein belongs to the aldo/keto reductase family. Aldo/keto reductase 2 subfamily. As to quaternary structure, monomer.

The protein is Aldo-keto reductase yakc [NADP(+)] (yakc) of Schizosaccharomyces pombe (strain 972 / ATCC 24843) (Fission yeast).